The primary structure comprises 201 residues: CASP-like protein 2D1 (201 aa).

Residues 1–26 are Cytoplasmic-facing; sequence MRSGEGSTAAAAAAEEEKVKVAAPFR. A helical membrane pass occupies residues 27–47; the sequence is LAELGLRVCAVPLAVASVWEM. At 48–70 the chain is on the extracellular side; sequence ATNKQVDETYGEVRFSDLSGFRY. The chain crosses the membrane as a helical span at residues 71-91; that stretch reads LVWINAITAAYSVASILLSSC. The Cytoplasmic segment spans residues 92-98; sequence RFITRFD. Residues 99–119 form a helical membrane-spanning segment; it reads WLIFILDQASAYLLLTSASAA. Residues 120-148 lie on the Extracellular side of the membrane; it reads AEVVYLAREGDREVSWGEVCSYFGRFCGA. A helical membrane pass occupies residues 149-169; the sequence is ATVSVALNAAALLCFMALSLI. Residues 170–201 lie on the Cytoplasmic side of the membrane; sequence SAFRVFTKFNPPSQSNSKQQLSQEQGKPVVSG. The span at 180 to 194 shows a compositional bias: polar residues; it reads PPSQSNSKQQLSQEQ. Residues 180–201 are disordered; it reads PPSQSNSKQQLSQEQGKPVVSG.

This sequence belongs to the Casparian strip membrane proteins (CASP) family. In terms of assembly, homodimer and heterodimers.

It localises to the cell membrane. This chain is CASP-like protein 2D1, found in Oryza sativa subsp. indica (Rice).